The following is a 505-amino-acid chain: Cytochrome P450 CYP71D313 (505 aa).

Residues 1-21 (MELQFPLFSIFFVTILFFFLF) traverse the membrane as a helical segment. Position 441 (C441) interacts with heme. A helical membrane pass occupies residues 442–462 (PGIAFGIATIELPLALLLYHF).

Belongs to the cytochrome P450 family. Heme is required as a cofactor.

The protein localises to the membrane. Probable heme-thiolate monooxygenase. The polypeptide is Cytochrome P450 CYP71D313 (Panax ginseng (Korean ginseng)).